The sequence spans 306 residues: N-acetylmuramic acid 6-phosphate etherase (306 aa).

Residues 59 to 222 (TSQALAKGGR…STGTMVMLGK (164 aa)) enclose the SIS domain. The active-site Proton donor is Glu87. Glu118 is a catalytic residue.

This sequence belongs to the GCKR-like family. MurNAc-6-P etherase subfamily. As to quaternary structure, homodimer.

It catalyses the reaction N-acetyl-D-muramate 6-phosphate + H2O = N-acetyl-D-glucosamine 6-phosphate + (R)-lactate. It participates in amino-sugar metabolism; N-acetylmuramate degradation. Functionally, specifically catalyzes the cleavage of the D-lactyl ether substituent of MurNAc 6-phosphate, producing GlcNAc 6-phosphate and D-lactate. The polypeptide is N-acetylmuramic acid 6-phosphate etherase (Microcystis aeruginosa (strain NIES-843 / IAM M-2473)).